We begin with the raw amino-acid sequence, 307 residues long: MKAGIIYNEGKPLAVELAAHVRRILELQGWEVHMATGIGGILGYSRPDSPVCHTPIDQLVPPGFDASMAFAVVLGGDGTVLSAFRQLAPCEIPLLTINTGHLGFLTEGYVADLEPALDQVLRGDYTIEDRTMLTVQVLRDQTVIWEALSLNEMVIHKEPLTGMCHFEVDVGAHARVDIAADGLILSTPTGSTAYALSAGGPVITPGVAALQLVPICPHSLASRALVFSNSEPVWIYPANPFKHLILVVDGNAGCYIQPEDQVFVQRAPYRARFIRLRAPEFFHVLQQKLGWGLPHVAKPRAKKSTDS.

Asp77 acts as the Proton acceptor in catalysis. NAD(+) is bound by residues 77–78 (DG), 151–152 (NE), Asp181, 192–197 (TAYALS), and Asn251.

The protein belongs to the NAD kinase family. A divalent metal cation serves as cofactor.

It localises to the cytoplasm. It catalyses the reaction NAD(+) + ATP = ADP + NADP(+) + H(+). Its function is as follows. Involved in the regulation of the intracellular balance of NAD and NADP, and is a key enzyme in the biosynthesis of NADP. Catalyzes specifically the phosphorylation on 2'-hydroxyl of the adenosine moiety of NAD to yield NADP. The polypeptide is NAD kinase 2 (Thermosynechococcus vestitus (strain NIES-2133 / IAM M-273 / BP-1)).